A 494-amino-acid chain; its full sequence is Protein transport protein Sec61 subunit alpha (494 aa).

Helical transmembrane passes span 36–56 (LWTSIVVFLYLVCCQIPLYGI), 79–99 (LMELGISPIVTSGLVMQLLAG), 122–142 (LLGILITIGESVAYVLSGMYG), 147–167 (LGAGNAILIIVQLFTSGIIVI), 177–197 (YGIGSAISLFIATNVCESIVW), 249–269 (LLATVLVFVLVVYFQGFQVEL), 294–314 (MPIILQTALVSNLYFISQILY), 359–379 (IVSDPVHALLYIIFILASCAL), 426–446 (AAFGGMCIGALSIVADFMGAI), and 450–470 (TGILLAVTTIYQSWETILLAV).

The protein belongs to the SecY/SEC61-alpha family. In terms of assembly, heterotrimeric complex composed of SEC61-alpha, SEC61-beta and SEC61-gamma.

The protein resides in the endoplasmic reticulum membrane. Appears to play a crucial role in the insertion of secretory and membrane polypeptides into the ER. It is required for assembly of membrane and secretory proteins. This is Protein transport protein Sec61 subunit alpha from Pyrenomonas salina.